A 269-amino-acid polypeptide reads, in one-letter code: Mitochondrial acidic protein mam33 (269 aa).

This sequence belongs to the MAM33 family.

The protein resides in the cytoplasm. Its subcellular location is the mitochondrion matrix. The polypeptide is Mitochondrial acidic protein mam33 (Schizosaccharomyces pombe (strain 972 / ATCC 24843) (Fission yeast)).